The chain runs to 287 residues: Spermidine/putrescine transport system permease protein PotB (287 aa).

The Cytoplasmic segment spans residues 1–10 (MKNTSKFQNV). The helical transmembrane segment at 11–31 (VIVTIVGWLVLFVFLPNLMII) threads the bilayer. Residues 32–70 (GTSFLTRDDASFVKMVFTLDNYARLLDPLYFEVLLHSLN) lie on the Periplasmic side of the membrane. The 207-residue stretch at 65-271 (LLHSLNMALI…IVMGLMLLIY (207 aa)) folds into the ABC transmembrane type-1 domain. Residues 71-91 (MALIATLSCLVLGYPFAWFLA) traverse the membrane as a helical segment. The Cytoplasmic segment spans residues 92-99 (KLPEKIRP). The chain crosses the membrane as a helical span at residues 100–120 (LLLFLLIVPFWTNSLIRIYGL). Topologically, residues 121–145 (KIFLSTKGYLNEFLLWLGVIDTPIR) are periplasmic. The helical transmembrane segment at 146 to 166 (IMFTPSAVIIGLVYILLPFMV) threads the bilayer. Residues 167–197 (MPLYSSIEKLDKPLLEAARDLGASKMQTFIR) lie on the Cytoplasmic side of the membrane. Residues 198–218 (IIIPLTMPGIVAGCLLVMLPA) traverse the membrane as a helical segment. Topologically, residues 219–251 (MGLFYVSDLMGGAKNLLIGNVIKVQFLNIRDWP) are periplasmic. Residues 252–272 (FGAATSITLTIVMGLMLLIYW) form a helical membrane-spanning segment. The Cytoplasmic segment spans residues 273–287 (RASRLLNKKVSDISD).

This sequence belongs to the binding-protein-dependent transport system permease family. CysTW subfamily.

It localises to the cell inner membrane. In terms of biological role, required for the activity of the bacterial periplasmic transport system of putrescine and spermidine. This is Spermidine/putrescine transport system permease protein PotB (potB) from Salmonella typhi.